Here is a 612-residue protein sequence, read N- to C-terminus: uncharacterized protein (612 aa).

The region spanning Glu8–Gly75 is the J domain. Residues Ala445–Leu465 traverse the membrane as a helical segment.

The protein belongs to the DnaJ family.

It is found in the membrane. This is an uncharacterized protein from Schizosaccharomyces pombe (strain 972 / ATCC 24843) (Fission yeast).